The primary structure comprises 259 residues: Deoxyribose-phosphate aldolase (259 aa).

Catalysis depends on Asp-102, which acts as the Proton donor/acceptor. Lys-167 serves as the catalytic Schiff-base intermediate with acetaldehyde. Lys-201 acts as the Proton donor/acceptor in catalysis.

It belongs to the DeoC/FbaB aldolase family. DeoC type 2 subfamily.

The protein localises to the cytoplasm. It carries out the reaction 2-deoxy-D-ribose 5-phosphate = D-glyceraldehyde 3-phosphate + acetaldehyde. Its pathway is carbohydrate degradation; 2-deoxy-D-ribose 1-phosphate degradation; D-glyceraldehyde 3-phosphate and acetaldehyde from 2-deoxy-alpha-D-ribose 1-phosphate: step 2/2. Functionally, catalyzes a reversible aldol reaction between acetaldehyde and D-glyceraldehyde 3-phosphate to generate 2-deoxy-D-ribose 5-phosphate. The protein is Deoxyribose-phosphate aldolase of Shigella boydii serotype 4 (strain Sb227).